The primary structure comprises 437 residues: Eukaryotic peptide chain release factor subunit 1 (437 aa).

The NIKS motif; plays an important role in translational termination motif lies at 61–64; it reads NIKS.

This sequence belongs to the eukaryotic release factor 1 family. As to quaternary structure, component of the eRF1-eRF3-GTP ternary complex, composed of ETF1/ERF1 and eRF3 (GSPT1/ERF3A or GSPT2/ERF3B) and GTP.

The protein localises to the cytoplasm. Functionally, component of the eRF1-eRF3-GTP ternary complex, a ternary complex that mediates translation termination in response to the termination codons. The eRF1-eRF3-GTP complex binds to a stop codon in the ribosomal A-site. ETF1/ERF1 is responsible for stop codon recognition and inducing hydrolysis of peptidyl-tRNA. Following GTP hydrolysis, eRF3 (GSPT1/ERF3A or GSPT2/ERF3B) dissociates, permitting ETF1/eRF1 to accommodate fully in the A-site, followed by hydrolysis of peptidyl-tRNA. The protein is Eukaryotic peptide chain release factor subunit 1 (etf1) of Xenopus laevis (African clawed frog).